The chain runs to 184 residues: Holliday junction branch migration complex subunit RuvA (184 aa).

Residues 1-61 form a domain I region; it reads MIAALRGNIF…ENEYTLYGFA (61 aa). The interval 62–135 is domain II; it reads DKNEKKLFDS…GEFEVVFEEQ (74 aa). Q135 is a region of interest (flexible linker). The tract at residues 135 to 184 is domain III; sequence QNPVFNQALSALESLGFNKNDIVKALNGIKSDNLEETIKLALKKLSKDIK.

This sequence belongs to the RuvA family. In terms of assembly, homotetramer. Forms an RuvA(8)-RuvB(12)-Holliday junction (HJ) complex. HJ DNA is sandwiched between 2 RuvA tetramers; dsDNA enters through RuvA and exits via RuvB. An RuvB hexamer assembles on each DNA strand where it exits the tetramer. Each RuvB hexamer is contacted by two RuvA subunits (via domain III) on 2 adjacent RuvB subunits; this complex drives branch migration. In the full resolvosome a probable DNA-RuvA(4)-RuvB(12)-RuvC(2) complex forms which resolves the HJ.

The protein resides in the cytoplasm. Functionally, the RuvA-RuvB-RuvC complex processes Holliday junction (HJ) DNA during genetic recombination and DNA repair, while the RuvA-RuvB complex plays an important role in the rescue of blocked DNA replication forks via replication fork reversal (RFR). RuvA specifically binds to HJ cruciform DNA, conferring on it an open structure. The RuvB hexamer acts as an ATP-dependent pump, pulling dsDNA into and through the RuvAB complex. HJ branch migration allows RuvC to scan DNA until it finds its consensus sequence, where it cleaves and resolves the cruciform DNA. This Nautilia profundicola (strain ATCC BAA-1463 / DSM 18972 / AmH) protein is Holliday junction branch migration complex subunit RuvA.